We begin with the raw amino-acid sequence, 242 residues long: Venom nerve growth factor 2 (242 aa).

An N-terminal signal peptide occupies residues 1-18 (MSMLCYTLIIAFLIGIWA). A propeptide spanning residues 19–125 (APQSEDNVPL…ALNRNIQAKR (107 aa)) is cleaved from the precursor. The segment covering 47–66 (DLKTSRNTDQRHPAPKKADD) has biased composition (basic and acidic residues). The tract at residues 47–70 (DLKTSRNTDQRHPAPKKADDQELG) is disordered. 3 disulfides stabilise this stretch: cysteine 139/cysteine 203, cysteine 181/cysteine 231, and cysteine 191/cysteine 233.

It belongs to the NGF-beta family. Homodimer; non-covalently linked. In terms of tissue distribution, expressed by the venom gland.

It localises to the secreted. In terms of biological role, nerve growth factor is important for the development and maintenance of the sympathetic and sensory nervous systems. It stimulates division and differentiation of sympathetic and embryonic sensory neurons as well as basal forebrain cholinergic neurons in the brain. Its relevance in the snake venom is not clear. However, it has been shown to inhibit metalloproteinase-dependent proteolysis of platelet glycoprotein Ib alpha, suggesting a metalloproteinase inhibition to prevent metalloprotease autodigestion and/or protection against prey proteases. Binds a lipid between the two protein chains in the homodimer. The lipid-bound form promotes histamine relase from mouse mast cells, contrary to the lipid-free form. In Pseudechis australis (Mulga snake), this protein is Venom nerve growth factor 2.